Here is a 633-residue protein sequence, read N- to C-terminus: Threonine--tRNA ligase (633 aa).

Residues 1–59 (MIRITFSAEQKVKEYSGKVTGFDILQPDVLKEAIAFKVNGELHDLSREIEADAEIEVIQ) enclose the TGS domain. Residues 240 to 532 (DHRKIAKDMD…LIENYAGKFP (293 aa)) are catalytic. 3 residues coordinate Zn(2+): C332, H383, and H509.

It belongs to the class-II aminoacyl-tRNA synthetase family. In terms of assembly, homodimer. Requires Zn(2+) as cofactor.

The protein resides in the cytoplasm. It carries out the reaction tRNA(Thr) + L-threonine + ATP = L-threonyl-tRNA(Thr) + AMP + diphosphate + H(+). Catalyzes the attachment of threonine to tRNA(Thr) in a two-step reaction: L-threonine is first activated by ATP to form Thr-AMP and then transferred to the acceptor end of tRNA(Thr). Also edits incorrectly charged L-seryl-tRNA(Thr). The sequence is that of Threonine--tRNA ligase from Wolbachia sp. subsp. Drosophila simulans (strain wRi).